The following is a 151-amino-acid chain: 3-dehydroquinate dehydratase (151 aa).

Residue Tyr24 is the Proton acceptor of the active site. The substrate site is built by Asn76, His82, and Asp89. His102 acts as the Proton donor in catalysis. Residues 103–104 (VS) and Arg113 contribute to the substrate site.

The protein belongs to the type-II 3-dehydroquinase family. Homododecamer.

It carries out the reaction 3-dehydroquinate = 3-dehydroshikimate + H2O. Its pathway is metabolic intermediate biosynthesis; chorismate biosynthesis; chorismate from D-erythrose 4-phosphate and phosphoenolpyruvate: step 3/7. Functionally, catalyzes a trans-dehydration via an enolate intermediate. In Rhodopseudomonas palustris (strain ATCC BAA-98 / CGA009), this protein is 3-dehydroquinate dehydratase.